We begin with the raw amino-acid sequence, 255 residues long: Ribonuclease PH (255 aa).

Phosphate is bound by residues R86 and 124-126 (GTR).

The protein belongs to the RNase PH family. In terms of assembly, homohexameric ring arranged as a trimer of dimers.

The enzyme catalyses tRNA(n+1) + phosphate = tRNA(n) + a ribonucleoside 5'-diphosphate. In terms of biological role, phosphorolytic 3'-5' exoribonuclease that plays an important role in tRNA 3'-end maturation. Removes nucleotide residues following the 3'-CCA terminus of tRNAs; can also add nucleotides to the ends of RNA molecules by using nucleoside diphosphates as substrates, but this may not be physiologically important. Probably plays a role in initiation of 16S rRNA degradation (leading to ribosome degradation) during starvation. The protein is Ribonuclease PH of Geobacillus sp. (strain WCH70).